The sequence spans 411 residues: Serine--tRNA ligase (411 aa).

226-228 is a binding site for L-serine; sequence TSE. 257 to 259 lines the ATP pocket; it reads RKE. Residue Glu280 coordinates L-serine. Residue 344–347 coordinates ATP; it reads EISS. Ser379 serves as a coordination point for L-serine.

This sequence belongs to the class-II aminoacyl-tRNA synthetase family. Type-1 seryl-tRNA synthetase subfamily. As to quaternary structure, homodimer. The tRNA molecule binds across the dimer.

The protein localises to the cytoplasm. The catalysed reaction is tRNA(Ser) + L-serine + ATP = L-seryl-tRNA(Ser) + AMP + diphosphate + H(+). The enzyme catalyses tRNA(Sec) + L-serine + ATP = L-seryl-tRNA(Sec) + AMP + diphosphate + H(+). It functions in the pathway aminoacyl-tRNA biosynthesis; selenocysteinyl-tRNA(Sec) biosynthesis; L-seryl-tRNA(Sec) from L-serine and tRNA(Sec): step 1/1. Functionally, catalyzes the attachment of serine to tRNA(Ser). Is also able to aminoacylate tRNA(Sec) with serine, to form the misacylated tRNA L-seryl-tRNA(Sec), which will be further converted into selenocysteinyl-tRNA(Sec). The polypeptide is Serine--tRNA ligase (Campylobacter jejuni subsp. doylei (strain ATCC BAA-1458 / RM4099 / 269.97)).